Here is a 130-residue protein sequence, read N- to C-terminus: Albumin-1 C (130 aa).

The N-terminal stretch at 1 to 26 (MASVKLASLIVLFATLGMFLTKNVGA) is a signal peptide. Cystine bridges form between C29–C46, C33–C48, and C41–C58. 2 consecutive propeptides follow at residues 64–69 (VFLRTN) and 123–130 (LLKSVSTA).

In terms of processing, the C-terminal glycine may be removed from PA1b. Major component of both the cotyledons and embryonic axes of mature seeds.

PA1b binds to basic 7S globulin (BG) and stimulates its phosphorylation activity. Involved in the signal transduction system to regulate the growth and differentiation as a hormone peptide. Toxic to various insects through binding to a high affinity binding site in the insect gut. The chain is Albumin-1 C from Pisum sativum (Garden pea).